The chain runs to 410 residues: Mating-type locus allele B5 protein (410 aa).

The segment at 1-110 is variable domain between B alleles; the sequence is MSSDPNFSLT…FNVVSPAVVC (110 aa). Residues 107–184 constitute a DNA-binding region (homeobox; TALE-type); the sequence is AVVCRNLSED…NARRRSGWSH (78 aa). The tract at residues 111–410 is highly conserved between B alleles; sequence RNLSEDLPAY…PFLCLSVAFV (300 aa). Disordered regions lie at residues 201–241, 275–336, and 366–395; these read VRAK…TPAD, NKKT…PELS, and ILQS…PDEV. Residues 206-222 are compositionally biased toward low complexity; it reads SSSNQSTPPSPTSEYPS. Positions 276–308 match the Nuclear localization signal motif; that stretch reads KKTPKPGMPRPVTTVTKRQPARKTKPAAKPKSR. A compositionally biased stretch (basic residues) spans 294 to 307; the sequence is QPARKTKPAAKPKS. Residues 312 to 336 show a composition bias toward polar residues; it reads PRASTTPSIDSTLDSSKLESTPELS. Residues 333–410 form a not essential for B5 function region; sequence PELSMCSTAD…PFLCLSVAFV (78 aa). The span at 375–388 shows a compositional bias: basic residues; that stretch reads RGNRKVKALPKRAG.

Belongs to the TALE/M-ATYP homeobox family.

It localises to the nucleus. The B locus has at least 25 alleles, and any combination of two different B alleles yields a multimeric regulatory protein, that activates genes responsible for the pathogenicity and for the sexual development of the fungus within the corn plant. This Mycosarcoma maydis (Corn smut fungus) protein is Mating-type locus allele B5 protein.